The chain runs to 260 residues: Putative ABC transporter ATP-binding protein (260 aa).

The ABC transporter domain maps to 4–243; that stretch reads ISMKNVTLKK…QVLENFYESP (240 aa). 36–43 lines the ATP pocket; it reads GLNGSGKT.

It belongs to the ABC transporter superfamily.

The polypeptide is Putative ABC transporter ATP-binding protein (abcX) (Streptococcus mutans serotype c (strain ATCC 700610 / UA159)).